An 893-amino-acid chain; its full sequence is Alanine--tRNA ligase (893 aa).

This sequence belongs to the class-II aminoacyl-tRNA synthetase family.

The protein resides in the cytoplasm. It catalyses the reaction tRNA(Ala) + L-alanine + ATP = L-alanyl-tRNA(Ala) + AMP + diphosphate. Its function is as follows. Catalyzes the attachment of alanine to tRNA(Ala) in a two-step reaction: alanine is first activated by ATP to form Ala-AMP and then transferred to the acceptor end of tRNA(Ala). Also edits incorrectly charged Ser-tRNA(Ala) and Gly-tRNA(Ala) via its editing domain. The sequence is that of Alanine--tRNA ligase (alaS) from Leuconostoc mesenteroides subsp. mesenteroides (strain ATCC 8293 / DSM 20343 / BCRC 11652 / CCM 1803 / JCM 6124 / NCDO 523 / NBRC 100496 / NCIMB 8023 / NCTC 12954 / NRRL B-1118 / 37Y).